The sequence spans 166 residues: MRAFATNVCTGPVDVLINNAGVSGLWCALGDVDYADMARTFTINALGPLRVTSAMLPGLRQGALRRVAHVTSRMGSLAANTDGGAYAYRMSKAALNMAVRSMSTDLRPEGFVTVLLHPGWVQTDMGGPDATLPAPDSVRGMLRVIDGLNPEHSGRFFDYQGTEVPW.

In terms of processing, the mature C-signal (p17) is derived from the precursor sequence (p25) by proteolytic cleavage. The subtilisin-like protease PopC is directly responsible for cleavage of p25 to p17. The cleavage site is probably located between amino acid residues 60 and 68 in p25.

The protein localises to the secreted. It is found in the cell outer membrane. Its activity is regulated as follows. Synthesized as a precursor protein (p25), which is cleaved after secretion to generate the mature active C-signal (p17). The p25 precursor purified from M.xanthus cells does not display C-signal activity. In terms of biological role, cell-cell signaling protein required for fruiting body formation, a multicellular developmental program that is induced in response to starvation. Necessary for rippling, cellular aggregation, spore differentiation and for gene expression that is initiated after 6 hours of starvation. In starving cells, the C-signal directly induces aggregation and sporulation, which are induced at distinct threshold levels of C-signaling. Contact with C-signaling induces cells to glide with high speed and low stop and reversal frequencies toward aggregation centers. The C-signal acts as a morphogen and induces distinct events at distinct threshold levels. A regulated increase in the level of C-signaling during development ensures the correct temporal order of aggregation and sporulation. The sequence is that of C-signal from Myxococcus xanthus.